The following is a 414-amino-acid chain: CCA-adding enzyme (414 aa).

Residues glycine 8 and arginine 11 each coordinate ATP. Residues glycine 8 and arginine 11 each contribute to the CTP site. Mg(2+) contacts are provided by aspartate 21 and aspartate 23. Residues arginine 92, arginine 138, and arginine 141 each contribute to the ATP site. Residues arginine 92, arginine 138, and arginine 141 each contribute to the CTP site.

This sequence belongs to the tRNA nucleotidyltransferase/poly(A) polymerase family. Bacterial CCA-adding enzyme type 2 subfamily. Mg(2+) serves as cofactor.

It catalyses the reaction a tRNA precursor + 2 CTP + ATP = a tRNA with a 3' CCA end + 3 diphosphate. The catalysed reaction is a tRNA with a 3' CCA end + 2 CTP + ATP = a tRNA with a 3' CCACCA end + 3 diphosphate. Catalyzes the addition and repair of the essential 3'-terminal CCA sequence in tRNAs without using a nucleic acid template. Adds these three nucleotides in the order of C, C, and A to the tRNA nucleotide-73, using CTP and ATP as substrates and producing inorganic pyrophosphate. tRNA 3'-terminal CCA addition is required both for tRNA processing and repair. Also involved in tRNA surveillance by mediating tandem CCA addition to generate a CCACCA at the 3' terminus of unstable tRNAs. While stable tRNAs receive only 3'-terminal CCA, unstable tRNAs are marked with CCACCA and rapidly degraded. The protein is CCA-adding enzyme of Buchnera aphidicola subsp. Cinara cedri (strain Cc).